The primary structure comprises 608 residues: Cytoplasmic dynein 1 intermediate chain 1 (608 aa).

Composition is skewed to basic and acidic residues over residues 1-13 and 20-60; these read MSDK…ELER and QIRE…RETE. Positions 1–106 are disordered; the sequence is MSDKSDLKAE…SGDLGPLTRR (106 aa). Position 2 is an N-acetylserine (S2). S50 is subject to Phosphoserine. Pro residues predominate over residues 70 to 79; that stretch reads PEPPLVPTPM. Over residues 80 to 90 the composition is skewed to low complexity; that stretch reads SPSSKSVSTPS. Position 83 is a phosphoserine (S83). T88 is modified (phosphothreonine). 3 positions are modified to phosphoserine: S90, S94, and S97. The tract at residues 110–126 is interaction with DYNLT1; it reads KLGVSKITQVDFLPREV. The interval 132–184 is disordered; that stretch reads ETQTPLATHQSEEDEDDEEMVEPKGDQDSEQENEDKKQEVKEAPPRELTEEEK. Residue T139 is modified to Phosphothreonine. A phosphoserine mark is found at S142 and S160. Over residues 165 to 184 the composition is skewed to basic and acidic residues; it reads EDKKQEVKEAPPRELTEEEK. 7 WD repeats span residues 248-297, 301-341, 350-391, 400-440, 445-490, 493-533, and 539-578; these read SKHR…TTPE, HCQS…RTPV, AHTH…TPQE, SKPV…AGIG, GHQG…PLYS, DNAD…EVPT, and EGAS…VPHN. The residue at position 598 (S598) is a Phosphoserine.

It belongs to the dynein intermediate chain family. As to quaternary structure, homodimer. The cytoplasmic dynein 1 complex consists of two catalytic heavy chains (HCs) and a number of non-catalytic subunits presented by intermediate chains (ICs), light intermediate chains (LICs) and light chains (LCs); the composition seems to vary in respect to the IC, LIC and LC composition. The heavy chain homodimer serves as a scaffold for the probable homodimeric assembly of the respective non-catalytic subunits. The ICs and LICs bind directly to the HC dimer and the LCs assemble on the IC dimer. Interacts with DYNC1H1. Interacts with DYNLT1 and DYNLT3. Interacts with DCTN1. Interacts with MCRS1; the interaction is required for the proper distribution of centriolar satellites.

The protein resides in the cytoplasm. The protein localises to the chromosome. Its subcellular location is the centromere. It is found in the kinetochore. It localises to the cytoskeleton. The protein resides in the spindle pole. Acts as one of several non-catalytic accessory components of the cytoplasmic dynein 1 complex that are thought to be involved in linking dynein to cargos and to adapter proteins that regulate dynein function. Cytoplasmic dynein 1 acts as a motor for the intracellular retrograde motility of vesicles and organelles along microtubules. The intermediate chains mediate the binding of dynein to dynactin via its 150 kDa component (p150-glued) DCTN1. May play a role in mediating the interaction of cytoplasmic dynein with membranous organelles and kinetochores. In Bos taurus (Bovine), this protein is Cytoplasmic dynein 1 intermediate chain 1 (DYNC1I1).